The sequence spans 204 residues: Large ribosomal subunit protein uL3 (204 aa).

It belongs to the universal ribosomal protein uL3 family. As to quaternary structure, part of the 50S ribosomal subunit. Forms a cluster with proteins L14 and L19.

Functionally, one of the primary rRNA binding proteins, it binds directly near the 3'-end of the 23S rRNA, where it nucleates assembly of the 50S subunit. In Azobacteroides pseudotrichonymphae genomovar. CFP2, this protein is Large ribosomal subunit protein uL3.